The following is a 270-amino-acid chain: Structure-specific endonuclease subunit SLX1 (270 aa).

Residues 9-94 (RFFGVYLLYC…PQASRRLTHV (86 aa)) enclose the GIY-YIG domain. Residues 182–234 (CSLCARLLQDEEGPLCCPHPGCPLRAHIICLAEEFLQEEPGQLLPLEGHCPSC) form an SLX1-type zinc finger.

This sequence belongs to the SLX1 family. As to quaternary structure, forms a heterodimer with SLX4. A divalent metal cation serves as cofactor. Expressed in testis, colon, bone marrow, brain, thymus and to a lesser extent in heart, kidney, skeletal muscle and spleen.

Its subcellular location is the nucleus. In terms of biological role, catalytic subunit of the SLX1-SLX4 structure-specific endonuclease that resolves DNA secondary structures generated during DNA repair and recombination. Has endonuclease activity towards branched DNA substrates, introducing single-strand cuts in duplex DNA close to junctions with ss-DNA. Has a preference for 5'-flap structures, and promotes symmetrical cleavage of static and migrating Holliday junctions (HJs). Resolves HJs by generating two pairs of ligatable, nicked duplex products. This chain is Structure-specific endonuclease subunit SLX1 (Slx1b), found in Mus musculus (Mouse).